A 396-amino-acid chain; its full sequence is Probable sugar efflux transporter (396 aa).

Residues 1–14 (MTINPVSRKVAWLR) lie on the Cytoplasmic side of the membrane. Residues 15–35 (VVTLAIAAFIFNTTEFVPVGL) traverse the membrane as a helical segment. The Periplasmic portion of the chain corresponds to 36 to 49 (LSDIAESFHMQTAQ). A helical transmembrane segment spans residues 50–70 (VGIMLTIYAWVVAVMSLPFML). Over 71–80 (LTSQMERRKL) the chain is Cytoplasmic. The chain crosses the membrane as a helical span at residues 81–101 (LIYLFVLFIASHVLSFLAWNF). A topological domain (periplasmic) is located at residue threonine 102. Residues 103 to 123 (VLVISRIGIAFAHAIFWSITA) form a helical membrane-spanning segment. Topologically, residues 124 to 135 (SLAIRLAPAGKR) are cytoplasmic. Residues 136-156 (AQALSLIATGTALAMVLGLPI) form a helical membrane-spanning segment. The Periplasmic segment spans residues 157–168 (GRVVGQYFGWRT). The helical transmembrane segment at 169 to 189 (TFFAIGMGALITLLCLIKLLP) threads the bilayer. The Cytoplasmic segment spans residues 190-208 (KLPSEHSGSLKSLPLLFRR). Residues 209-229 (PALMSLYVLTVVVVTAHYTAY) form a helical membrane-spanning segment. Residues 230 to 245 (SYIEPFVQNVAGLSAN) lie on the Periplasmic side of the membrane. Residues 246-266 (FATVLLLILGGAGIIGSLVFG) form a helical membrane-spanning segment. Over 267-274 (KLGNRHAS) the chain is Cytoplasmic. The helical transmembrane segment at 275 to 295 (SLVSIAIALLVVCLLLLLPAA) threads the bilayer. The Periplasmic portion of the chain corresponds to 296–300 (ESEAH). Residues 301–321 (LAILSIFWGIAIMVIGLGMQV) form a helical membrane-spanning segment. At 322–332 (KVLALAPDATD) the chain is on the cytoplasmic side. Residues 333 to 353 (VAMALFSGIFNIGIGAGALVG) form a helical membrane-spanning segment. Topologically, residues 354–363 (NQVSLHWSMS) are periplasmic. The helical transmembrane segment at 364–384 (AIGYIGAIPACAALVWAVLIF) threads the bilayer. Over 385–396 (RKWPVTLEEQPH) the chain is Cytoplasmic.

This sequence belongs to the major facilitator superfamily. SotB (TC 2.A.1.2) family.

The protein resides in the cell inner membrane. Its function is as follows. Involved in the efflux of sugars. The physiological role may be the reduction of the intracellular concentration of toxic sugars or sugar metabolites. The sequence is that of Probable sugar efflux transporter from Salmonella typhimurium (strain LT2 / SGSC1412 / ATCC 700720).